Reading from the N-terminus, the 1182-residue chain is Myosin IC heavy chain (1182 aa).

The Myosin motor domain maps to 15–698; sequence EGLDDMTLLS…MLFSLEETRE (684 aa). 109–116 contributes to the ATP binding site; that stretch reads GESGAGKT. The interval 571 to 593 is actin-binding; that stretch reads AAELVATLMKSTPHYIRTIKPND. The TH1 domain maps to 774–957; sequence RNRFSMISVR…QFHIASGLPA (184 aa). 2 disordered regions span residues 999 to 1052 and 1064 to 1103; these read KPAP…PAPG and SKPLPSPTGAPMMKKPAPTAPGGPAPAGAPTPMMKKPAGQ. Low complexity predominate over residues 1013–1042; sequence KKPAPTAPGGAPMMKKPAPAPGGAPMMKKP. Residues 1081–1092 show a composition bias toward pro residues; it reads PTAPGGPAPAGA. The 60-residue stretch at 1123-1182 folds into the SH3 domain; it reads PPPQQYIALYEYDAMQPDELTFKENDVINLIKKVDADWWQGELVRTKQIGMLPSNYVQQI.

This sequence belongs to the TRAFAC class myosin-kinesin ATPase superfamily. Myosin family. As to quaternary structure, myosin I heavy chain is single-headed. Dimer of a heavy and a light chain. Inability to self-assemble into filaments.

Its subcellular location is the cell projection. It is found in the lamellipodium. Functionally, myosin is a protein that binds to actin and has ATPase activity that is activated by actin. Involved in the process of phagocytosis and appears to support streaming behavior. The polypeptide is Myosin IC heavy chain (myoC) (Dictyostelium discoideum (Social amoeba)).